Here is a 180-residue protein sequence, read N- to C-terminus: NADH-quinone oxidoreductase subunit I (180 aa).

2 4Fe-4S ferredoxin-type domains span residues 50–80 (LTRD…LQKA) and 90–119 (EFFR…LTPD). Residues C60, C63, C66, C70, C99, C102, C105, and C109 each contribute to the [4Fe-4S] cluster site.

Belongs to the complex I 23 kDa subunit family. NDH-1 is composed of 13 different subunits. Subunits NuoA, H, J, K, L, M, N constitute the membrane sector of the complex. Requires [4Fe-4S] cluster as cofactor.

It localises to the cell inner membrane. It carries out the reaction a quinone + NADH + 5 H(+)(in) = a quinol + NAD(+) + 4 H(+)(out). NDH-1 shuttles electrons from NADH, via FMN and iron-sulfur (Fe-S) centers, to quinones in the respiratory chain. The immediate electron acceptor for the enzyme in this species is believed to be ubiquinone. Couples the redox reaction to proton translocation (for every two electrons transferred, four hydrogen ions are translocated across the cytoplasmic membrane), and thus conserves the redox energy in a proton gradient. The polypeptide is NADH-quinone oxidoreductase subunit I (Shigella sonnei (strain Ss046)).